Reading from the N-terminus, the 192-residue chain is Thymidine kinase (192 aa).

ATP-binding positions include 9–16 (GAMNSGKS) and 85–88 (DEVQ). Glu86 serves as the catalytic Proton acceptor. 4 residues coordinate Zn(2+): Cys143, Cys146, Cys181, and Cys184.

It belongs to the thymidine kinase family. In terms of assembly, homotetramer.

The protein resides in the cytoplasm. It carries out the reaction thymidine + ATP = dTMP + ADP + H(+). The chain is Thymidine kinase from Shouchella clausii (strain KSM-K16) (Alkalihalobacillus clausii).